The primary structure comprises 568 residues: MFS-type efflux transporter phmH (568 aa).

The span at Met-1–Gly-11 shows a compositional bias: polar residues. The disordered stretch occupies residues Met-1–Lys-39. The next 7 membrane-spanning stretches (helical) occupy residues Tyr-45–Leu-65, Tyr-101–Ser-121, Gly-134–Met-154, Ile-161–Ile-181, Ile-199–His-219, Val-237–Gly-257, and Ile-268–Ser-288. A glycan (N-linked (GlcNAc...) asparagine) is linked at Asn-303. Helical transmembrane passes span Ala-307–Tyr-327, Val-344–Val-364, Thr-372–Asp-392, Glu-399–Leu-419, Thr-437–Phe-457, and Ile-515–Leu-535. Asn-563 carries N-linked (GlcNAc...) asparagine glycosylation.

This sequence belongs to the major facilitator superfamily.

Its subcellular location is the cell membrane. Its function is as follows. MFS-type efflux transporter; part of the gene cluster that mediates the biosynthesis of thethe mycotoxins phomacins, leucine-derived cytochalasans with potent actin polymerization-inhibitory activities and monocot-specific antigerminative activities. PhmH might be involved in the excretion of phomacins. The chain is MFS-type efflux transporter phmH from Phaeosphaeria nodorum (strain SN15 / ATCC MYA-4574 / FGSC 10173) (Glume blotch fungus).